Consider the following 550-residue polypeptide: MKSLVLGLLVGSAIASGPLQHVLHAPPEPEPEPEPEPQVVKDPFEELRDTFDRLRNKAGDIWDDVMDNIPNIISNIRPPTIPPKKFTRLPDSEWTHIVRGADLEALWVDDESGYKHRKVDGKLAQYDLRIRAVDPSNLGIDNVKQYSGYLDDNLNDKHLFYWFFESRNDPDGDPVMLWLNGGPGCSSLTGMFFELGPSSITEDIKVKYNPYSWNSNSSIIFLDQPVNVGFSYSSQPVSDTVAAAKDIYALLTLFFTQFPQYSTQDFHIAGESYAGHYIPVIASEIMHHKDRNINLQSVMIGNGLTDPYTQYPLYRPMACGEGGYPNVLDSETCRSMDKALPRCLSMIKSCYDVESTFTCLPASIYCNNALIGPYQSTGRNPYDVRIDCKGNGLCYPQLNYITDYLNQPYVMKSLGVEVDSYESCNMDINRNFLLHGDWMKPYHRLVPYLLAQMPVLIYAGDADFICNWLGNKAWTEALEYPGHTKYAQSPMENLTMVNSEGINEIFGEVKSHSNLTFMRIFKAGHMTPFDTPQASLEFANSWLSGEWSEV.

An N-terminal signal peptide occupies residues 1-18 (MKSLVLGLLVGSAIASGP). Positions 19-131 (LQHVLHAPPE…KLAQYDLRIR (113 aa)) are excised as a propeptide. Intrachain disulfides connect Cys-185–Cys-424, Cys-319–Cys-333, Cys-343–Cys-366, Cys-350–Cys-359, and Cys-388–Cys-394. Asn-216 is a glycosylation site (N-linked (GlcNAc...) asparagine). Ser-272 is a catalytic residue. Asp-463 is a catalytic residue. N-linked (GlcNAc...) asparagine glycans are attached at residues Asn-493 and Asn-514. The active site involves His-525.

It belongs to the peptidase S10 family.

The protein localises to the vacuole. It catalyses the reaction Release of a C-terminal amino acid with broad specificity.. In terms of biological role, vacuolar carboxypeptidase involved in degradation of small peptides. Digests preferentially peptides containing an aliphatic or hydrophobic residue in P1' position, as well as methionine, leucine or phenylalanine in P1 position of ester substrate. This Paracoccidioides lutzii (strain ATCC MYA-826 / Pb01) (Paracoccidioides brasiliensis) protein is Carboxypeptidase Y homolog A (CPYA).